Consider the following 321-residue polypeptide: Anthranilate phosphoribosyltransferase (321 aa).

Residues Gly-72, 75–76 (GD), Thr-80, 82–85 (NVST), 99–107 (KHGNVSITS), and Ser-111 contribute to the 5-phospho-alpha-D-ribose 1-diphosphate site. Residue Gly-72 coordinates anthranilate. A Mg(2+)-binding site is contributed by Ser-84. An anthranilate-binding site is contributed by Asn-102. Arg-157 contacts anthranilate. Mg(2+) is bound by residues Asp-216 and Glu-217.

This sequence belongs to the anthranilate phosphoribosyltransferase family. As to quaternary structure, homodimer. It depends on Mg(2+) as a cofactor.

The catalysed reaction is N-(5-phospho-beta-D-ribosyl)anthranilate + diphosphate = 5-phospho-alpha-D-ribose 1-diphosphate + anthranilate. It participates in amino-acid biosynthesis; L-tryptophan biosynthesis; L-tryptophan from chorismate: step 2/5. Its function is as follows. Catalyzes the transfer of the phosphoribosyl group of 5-phosphorylribose-1-pyrophosphate (PRPP) to anthranilate to yield N-(5'-phosphoribosyl)-anthranilate (PRA). In Methanococcus maripaludis (strain DSM 14266 / JCM 13030 / NBRC 101832 / S2 / LL), this protein is Anthranilate phosphoribosyltransferase.